Consider the following 313-residue polypeptide: Acetyl-coenzyme A carboxylase carboxyl transferase subunit beta (313 aa).

Residues 24 to 293 (LWIKCPDSGQ…LETASKSVQP (270 aa)) form the CoA carboxyltransferase N-terminal domain.

This sequence belongs to the AccD/PCCB family. Acetyl-CoA carboxylase is a heterohexamer composed of biotin carboxyl carrier protein (AccB), biotin carboxylase (AccC) and two subunits each of ACCase subunit alpha (AccA) and ACCase subunit beta (AccD).

It localises to the cytoplasm. The enzyme catalyses N(6)-carboxybiotinyl-L-lysyl-[protein] + acetyl-CoA = N(6)-biotinyl-L-lysyl-[protein] + malonyl-CoA. It functions in the pathway lipid metabolism; malonyl-CoA biosynthesis; malonyl-CoA from acetyl-CoA: step 1/1. Component of the acetyl coenzyme A carboxylase (ACC) complex. Biotin carboxylase (BC) catalyzes the carboxylation of biotin on its carrier protein (BCCP) and then the CO(2) group is transferred by the transcarboxylase to acetyl-CoA to form malonyl-CoA. This Bradyrhizobium diazoefficiens (strain JCM 10833 / BCRC 13528 / IAM 13628 / NBRC 14792 / USDA 110) protein is Acetyl-coenzyme A carboxylase carboxyl transferase subunit beta.